We begin with the raw amino-acid sequence, 412 residues long: Aspartate aminotransferase, cytoplasmic (412 aa).

An N-acetylalanine modification is found at Ala-2. Residues Gly-38, Trp-140, and Asn-194 each coordinate L-aspartate. Residue Lys-258 is modified to N6-(pyridoxal phosphate)lysine. Arg-386 is a binding site for L-aspartate.

Belongs to the class-I pyridoxal-phosphate-dependent aminotransferase family. Homodimer. The cofactor is pyridoxal 5'-phosphate.

It localises to the cytoplasm. It catalyses the reaction L-aspartate + 2-oxoglutarate = oxaloacetate + L-glutamate. The enzyme catalyses L-cysteine + 2-oxoglutarate = 2-oxo-3-sulfanylpropanoate + L-glutamate. The catalysed reaction is (2S)-2-aminobutanoate + 2-oxoglutarate = 2-oxobutanoate + L-glutamate. It carries out the reaction 3-sulfino-L-alanine + 2-oxoglutarate = 3-sulfinopyruvate + L-glutamate. In terms of biological role, biosynthesis of L-glutamate from L-aspartate or L-cysteine. Important regulator of levels of glutamate, the major excitatory neurotransmitter of the vertebrate central nervous system. Acts as a scavenger of glutamate in brain neuroprotection. The aspartate aminotransferase activity is involved in hepatic glucose synthesis during development and in adipocyte glyceroneogenesis. Using L-cysteine as substrate, regulates levels of mercaptopyruvate, an important source of hydrogen sulfide. Mercaptopyruvate is converted into H(2)S via the action of 3-mercaptopyruvate sulfurtransferase (3MST). Hydrogen sulfide is an important synaptic modulator and neuroprotectant in the brain. In Gallus gallus (Chicken), this protein is Aspartate aminotransferase, cytoplasmic.